The sequence spans 154 residues: Fucose mutarotase (154 aa).

H24 functions as the Proton donor in the catalytic mechanism. Residue D32 coordinates substrate. Residue D69 is part of the active site. M79, Y120, Y138, and N140 together coordinate substrate. Residue Y120 is part of the active site.

Belongs to the RbsD / FucU family. As to quaternary structure, mainly homodimer, but also exists as homotetramer, homooctamer, and homodecamer. The homodimeric form seems catalytically inactive.

The enzyme catalyses alpha-L-fucose = beta-L-fucose. The protein operates within carbohydrate metabolism; L-fucose metabolism. Functionally, involved in the interconversion between alpha- and beta-L-fucoses. L-Fucose (6-deoxy-L-galactose) exists as alpha-L-fucose (29.5%) and beta-L-fucose (70.5%), the beta-form is metabolized through the salvage pathway. GDP-L-fucose formed either by the de novo or salvage pathways is transported into the endoplasmic reticulum, where it serves as a substrate for N- and O-glycosylations by fucosyltransferases. Fucosylated structures expressed on cell surfaces or secreted in biological fluids are believed to play a critical role in cell-cell adhesion and recognition processes. This chain is Fucose mutarotase (FUOM), found in Homo sapiens (Human).